We begin with the raw amino-acid sequence, 196 residues long: ATP-dependent Clp protease proteolytic subunit (196 aa).

Serine 101 (nucleophile) is an active-site residue. Histidine 126 is an active-site residue.

It belongs to the peptidase S14 family. In terms of assembly, component of the chloroplastic Clp protease core complex.

Its subcellular location is the plastid. The protein localises to the chloroplast stroma. It carries out the reaction Hydrolysis of proteins to small peptides in the presence of ATP and magnesium. alpha-casein is the usual test substrate. In the absence of ATP, only oligopeptides shorter than five residues are hydrolyzed (such as succinyl-Leu-Tyr-|-NHMec, and Leu-Tyr-Leu-|-Tyr-Trp, in which cleavage of the -Tyr-|-Leu- and -Tyr-|-Trp bonds also occurs).. Functionally, cleaves peptides in various proteins in a process that requires ATP hydrolysis. Has a chymotrypsin-like activity. Plays a major role in the degradation of misfolded proteins. In Lobularia maritima (Sweet alyssum), this protein is ATP-dependent Clp protease proteolytic subunit.